Reading from the N-terminus, the 96-residue chain is MEALGMIETRGLVALIEASDAMVKAARVKLVGVKQIGGGLCTAMVRGDVAACKAATDAGAAAAQRIGELVSVHVIPRPHGDLEEVFPISFKGDSNI.

The BMC domain occupies A3 to P87.

This sequence belongs to the bacterial microcompartments protein family. Homohexamer with a central pore of up to 8.6 Angstroms diameter. The hexamers pack into a two-dimensional array. Interacts with EutQ; a probably cytoplasm-facing helix (Val-49 to Gln-64) interacts with N-terminus of EutQ.

It localises to the bacterial microcompartment. Its pathway is amine and polyamine degradation; ethanolamine degradation. Probably a major component of the bacterial microcompartment (BMC) shell dedicated to ethanolamine degradation. Each homohexamer has a central pore with an opening of up to 8.6 Angstroms. A positively-charged funnel leads to the pore from each side of the hexamer. The pore probably allows metabolite passage into and out of the BMC. Expression of eutK, eutL, eutM, eutN, eutS (eutSMNLK) in E.coli leads to formation of a single BMC. Expression alone leads to thick filaments that interfere with cell separation. Coexpression of eutQ with eutSMNLK permits E.coli to make cells with more than one mobile BMC, as is usual in vivo. May play a role in BMC shell biogenesis. Can replace homolog pduA in the pdu operon, cells grow better than wild-type on 1,2-propanediol and vitamin B12. Protein is incorporated into the pdu BMC microcompartment. Functionally, the ethanolamine (EA) catabolic bacterial microcompartment (BMC) probably concentrates low levels of ethanolamine catabolic enzymes, concentrates volatile reaction intermediates, keeps the level of toxic acetaldehyde low, generates enough acetyl-CoA to support cell growth, and maintains a pool of free coenzyme A (CoA) and NAD. Deletion of BMC genes (eutK, eutL, eutM) restores growth of eutD deletions, suggesting there are dedicated pools of coenzyme A (CoA) and NAD in the BMC. In terms of biological role, expression of the eut operon allows this bacteria to use ethanolamine as a carbon, nitrogen and energy source. It relies on cobalamin (vitamin B12) both as a cofactor for the ethanolamine ammonia-lyase (EAL) activity and to induce the operon. EA enhances bacterial survival in macrophages in a concentration-dependent manner, suggesting it is an important nutrient during infection. In Salmonella typhimurium (strain LT2 / SGSC1412 / ATCC 700720), this protein is Bacterial microcompartment shell protein EutM.